Here is a 123-residue protein sequence, read N- to C-terminus: CD59A glycoprotein (123 aa).

The signal sequence occupies residues 1–23 (MRAQRGLILLLLLLAVFCSTAVS). In terms of domain architecture, UPAR/Ly6 spans 24 to 96 (LTCYHCFQPV…CCQFNLCNKS (73 aa)). 5 disulfide bridges follow: Cys26–Cys50, Cys29–Cys37, Cys43–Cys63, Cys69–Cys87, and Cys88–Cys93. Asn40 is a glycosylation site (N-linked (GlcNAc...) asparagine). The N-linked (GlcNAc...) asparagine glycan is linked to Asn94. Positions 97–123 (DGSLGKTPLLGTSVLVAILNLCFLSHL) are cleaved as a propeptide — removed in mature form.

Interacts with T-cell surface antigen CD2. N- and O-glycosylated. Expressed in all tissues examined (liver, kidney, spleen, thymus, brain and heart). Low levels in thymus. Also expressed in mononuclear cells, erythrocytes and platelets. Barely detected in neutrophils.

It localises to the cell membrane. The protein resides in the secreted. Potent inhibitor of the complement membrane attack complex (MAC) action, which protects self-cells from damage during complement activation. Acts by binding to the beta-haipins of C8 (C8A and C8B) components of the assembling MAC, forming an intermolecular beta-sheet that prevents incorporation of the multiple copies of C9 required for complete formation of the osmolytic pore. The chain is CD59A glycoprotein from Mus musculus (Mouse).